We begin with the raw amino-acid sequence, 70 residues long: Small ribosomal subunit protein bS21 (70 aa).

This sequence belongs to the bacterial ribosomal protein bS21 family.

This is Small ribosomal subunit protein bS21 from Cupriavidus pinatubonensis (strain JMP 134 / LMG 1197) (Cupriavidus necator (strain JMP 134)).